Reading from the N-terminus, the 499-residue chain is Bifunctional purine biosynthesis protein PurH (499 aa).

The region spanning 1–144 is the MGS-like domain; it reads MIKRALISVF…KNFKDVVVLT (144 aa).

The protein belongs to the PurH family.

It carries out the reaction (6R)-10-formyltetrahydrofolate + 5-amino-1-(5-phospho-beta-D-ribosyl)imidazole-4-carboxamide = 5-formamido-1-(5-phospho-D-ribosyl)imidazole-4-carboxamide + (6S)-5,6,7,8-tetrahydrofolate. It catalyses the reaction IMP + H2O = 5-formamido-1-(5-phospho-D-ribosyl)imidazole-4-carboxamide. The protein operates within purine metabolism; IMP biosynthesis via de novo pathway; 5-formamido-1-(5-phospho-D-ribosyl)imidazole-4-carboxamide from 5-amino-1-(5-phospho-D-ribosyl)imidazole-4-carboxamide (10-formyl THF route): step 1/1. It participates in purine metabolism; IMP biosynthesis via de novo pathway; IMP from 5-formamido-1-(5-phospho-D-ribosyl)imidazole-4-carboxamide: step 1/1. This Clostridium botulinum (strain Hall / ATCC 3502 / NCTC 13319 / Type A) protein is Bifunctional purine biosynthesis protein PurH.